A 126-amino-acid chain; its full sequence is UPF0235 protein C15orf40 homolog (126 aa).

Residues 1–33 (MPKKAGATSKGKNQTKEPETPPPPTGPVATDSK) are disordered. Position 89 is a phosphoserine (S89).

The protein belongs to the UPF0235 family.

The protein is UPF0235 protein C15orf40 homolog of Rattus norvegicus (Rat).